The sequence spans 419 residues: CCA-adding enzyme (419 aa).

ATP-binding residues include serine 54 and arginine 57. Residues serine 54 and arginine 57 each contribute to the CTP site. Mg(2+) contacts are provided by aspartate 66, aspartate 68, and aspartate 118. The ATP site is built by histidine 141, lysine 161, and tyrosine 170. CTP-binding residues include histidine 141, lysine 161, and tyrosine 170.

Belongs to the tRNA nucleotidyltransferase/poly(A) polymerase family. Archaeal CCA-adding enzyme subfamily. In terms of assembly, homodimer. The cofactor is Mg(2+).

It carries out the reaction a tRNA precursor + 2 CTP + ATP = a tRNA with a 3' CCA end + 3 diphosphate. The catalysed reaction is a tRNA with a 3' CCA end + 2 CTP + ATP = a tRNA with a 3' CCACCA end + 3 diphosphate. Catalyzes the addition and repair of the essential 3'-terminal CCA sequence in tRNAs without using a nucleic acid template. Adds these three nucleotides in the order of C, C, and A to the tRNA nucleotide-73, using CTP and ATP as substrates and producing inorganic pyrophosphate. tRNA 3'-terminal CCA addition is required both for tRNA processing and repair. Also involved in tRNA surveillance by mediating tandem CCA addition to generate a CCACCA at the 3' terminus of unstable tRNAs. While stable tRNAs receive only 3'-terminal CCA, unstable tRNAs are marked with CCACCA and rapidly degraded. The polypeptide is CCA-adding enzyme (Pyrobaculum aerophilum (strain ATCC 51768 / DSM 7523 / JCM 9630 / CIP 104966 / NBRC 100827 / IM2)).